The chain runs to 137 residues: Peptide methionine sulfoxide reductase MsrB (137 aa).

In terms of domain architecture, MsrB spans 7–129 (AEELKKNLSD…NSASLRFTDG (123 aa)). Zn(2+)-binding residues include cysteine 46, cysteine 49, cysteine 95, and cysteine 98. Residue cysteine 118 is the Nucleophile of the active site.

It belongs to the MsrB Met sulfoxide reductase family. The cofactor is Zn(2+).

The enzyme catalyses L-methionyl-[protein] + [thioredoxin]-disulfide + H2O = L-methionyl-(R)-S-oxide-[protein] + [thioredoxin]-dithiol. This Shigella dysenteriae serotype 1 (strain Sd197) protein is Peptide methionine sulfoxide reductase MsrB.